The sequence spans 280 residues: Octanoyl-[GcvH]:protein N-octanoyltransferase (280 aa).

Positions 40 to 245 constitute a BPL/LPL catalytic domain; the sequence is QERGAVLRAW…VLSTVSLLQN (206 aa). C144 (acyl-thioester intermediate) is an active-site residue.

It belongs to the octanoyltransferase LipL family.

The catalysed reaction is N(6)-octanoyl-L-lysyl-[glycine-cleavage complex H protein] + L-lysyl-[lipoyl-carrier protein] = N(6)-octanoyl-L-lysyl-[lipoyl-carrier protein] + L-lysyl-[glycine-cleavage complex H protein]. The protein operates within protein modification; protein lipoylation via endogenous pathway; protein N(6)-(lipoyl)lysine from octanoyl-[acyl-carrier-protein]. Catalyzes the amidotransfer (transamidation) of the octanoyl moiety from octanoyl-GcvH to the lipoyl domain of the E2 subunit of lipoate-dependent enzymes. This is Octanoyl-[GcvH]:protein N-octanoyltransferase from Exiguobacterium sp. (strain ATCC BAA-1283 / AT1b).